Consider the following 136-residue polypeptide: Ribosome-binding factor A (136 aa).

This sequence belongs to the RbfA family. As to quaternary structure, monomer. Binds 30S ribosomal subunits, but not 50S ribosomal subunits or 70S ribosomes.

Its subcellular location is the cytoplasm. In terms of biological role, one of several proteins that assist in the late maturation steps of the functional core of the 30S ribosomal subunit. Associates with free 30S ribosomal subunits (but not with 30S subunits that are part of 70S ribosomes or polysomes). Required for efficient processing of 16S rRNA. May interact with the 5'-terminal helix region of 16S rRNA. The protein is Ribosome-binding factor A of Cellvibrio japonicus (strain Ueda107) (Pseudomonas fluorescens subsp. cellulosa).